A 201-amino-acid polypeptide reads, in one-letter code: 3-isopropylmalate dehydratase small subunit (201 aa).

It belongs to the LeuD family. LeuD type 1 subfamily. As to quaternary structure, heterodimer of LeuC and LeuD.

It catalyses the reaction (2R,3S)-3-isopropylmalate = (2S)-2-isopropylmalate. It participates in amino-acid biosynthesis; L-leucine biosynthesis; L-leucine from 3-methyl-2-oxobutanoate: step 2/4. Functionally, catalyzes the isomerization between 2-isopropylmalate and 3-isopropylmalate, via the formation of 2-isopropylmaleate. The protein is 3-isopropylmalate dehydratase small subunit of Pasteurella multocida (strain Pm70).